Here is a 1749-residue protein sequence, read N- to C-terminus: Intraflagellar transport protein 172 homolog (1749 aa).

N-acetylmethionine is present on methionine 1. Residue lysine 4 forms a Glycyl lysine isopeptide (Lys-Gly) (interchain with G-Cter in SUMO1) linkage. 9 WD repeats span residues 14–53, 64–103, 110–148, 150–191, 195–233, 238–278, 284–323, 483–520, and 521–559; these read DGAA…RDKF, RKSY…GDKK, IQTS…SSTI, GTES…ESQG, NHPC…QTFD, PQER…WEEA, TNLY…SIYK, SHES…CSKT, and MILN…ERVT. A TPR 1 repeat occupies 593 to 624; it reads DEGLIEFGTAIDDGNYIRATAFLETLEMTPET. Arginine 672 carries the omega-N-methylarginine modification. TPR repeat units follow at residues 692–725, 809–842, 854–887, 912–945, 947–970, 971–1004, 1042–1075, 1142–1175, 1276–1309, 1345–1378, 1411–1445, 1447–1477, and 1574–1607; these read EKNY…DECI, GELY…MKAV, VKLE…IKAI, SKYY…KDAI, MYTQ…PEDV, SVLY…DLAI, EGRL…EEAY, PEVH…KEAV, VEGF…GNSG, IGKH…NKAK, GVDV…LHKY, ALYA…NPQN, and DKAF…TDAI.

This sequence belongs to the IFT172 family. In terms of assembly, interacts with IFT88. Interacts with IFT57. Interacts with RABL2/RABL2A; binds preferentially to GDP-bound RABL2.

It is found in the cell projection. The protein resides in the cilium. In terms of biological role, required for the maintenance and formation of cilia. Plays an indirect role in hedgehog (Hh) signaling, cilia being required for all activity of the hedgehog pathway. This is Intraflagellar transport protein 172 homolog (IFT172) from Homo sapiens (Human).